The sequence spans 145 residues: Small ribosomal subunit protein uS9 (145 aa).

This sequence belongs to the universal ribosomal protein uS9 family.

It localises to the cytoplasm. The chain is Small ribosomal subunit protein uS9 (RPS16) from Gossypium hirsutum (Upland cotton).